Consider the following 1032-residue polypeptide: Kinesin heavy chain isoform 5A (1032 aa).

Residue alanine 2 is modified to N-acetylalanine. Residues 9–327 form the Kinesin motor domain; the sequence is SIKVLCRFRP…LMFGQRAKTI (319 aa). 86–93 lines the ATP pocket; it reads GQTSSGKT. The tract at residues 174-315 is microtubule-binding; that stretch reads VSSPEEILDV…PSSYNDAETK (142 aa). Residues 271-361 form a necessary for interaction with ZFYVE27 region; it reads EGTKSYVPYR…KTKAQKETIA (91 aa). Residues 331–906 adopt a coiled-coil conformation; it reads ASVNLELTAE…VDRIKEAVRY (576 aa). Residues 353 to 1032 are interaction with BICD2; sequence TKAQKETIAK…FPLHQETAAS (680 aa). The residue at position 397 (threonine 397) is a Phosphothreonine. 2 disordered regions span residues 906 to 939 and 978 to 1010; these read YKSS…YGTR and SGAT…RSDL. The interval 907 to 1032 is globular; it reads KSSGKRGHSA…FPLHQETAAS (126 aa). Low complexity predominate over residues 978 to 989; the sequence is SGATSSGGPLAS. The span at 991 to 1003 shows a compositional bias: polar residues; the sequence is QKANMDNGNATDI.

Belongs to the TRAFAC class myosin-kinesin ATPase superfamily. Kinesin family. Kinesin subfamily. In terms of assembly, oligomer composed of two heavy chains and two light chains. Interacts with GRIP1. Interacts with FMR1 (via C-terminus); this interaction is increased in a mGluR-dependent manner. Interacts with ZFYVE27. Interacts with VAPA, VAPB, SURF4, RAB11A (GDP-bound form), RAB11B (GDP-bound form) and RTN3 in a ZFYVE27-dependent manner. Interacts with BORCS5. Interacts with BICD2. Interacts with DTNB. In terms of tissue distribution, distributed throughout the CNS but is highly enriched in subsets of neurons.

Its subcellular location is the cytoplasm. It localises to the perinuclear region. The protein resides in the cytoskeleton. The protein localises to the perikaryon. The catalysed reaction is ATP + H2O + a kinesin associated with a microtubule at position (n) = ADP + phosphate a kinesin associated with a microtubule at position (n+1, toward the plus end).. In terms of biological role, microtubule-dependent motor required for slow axonal transport of neurofilament proteins (NFH, NFM and NFL). Can induce formation of neurite-like membrane protrusions in non-neuronal cells in a ZFYVE27-dependent manner. The ZFYVE27-KIF5A complex contributes to the vesicular transport of VAPA, VAPB, SURF4, RAB11A, RAB11B and RTN3 proteins in neurons. Required for anterograde axonal transportation of MAPK8IP3/JIP3 which is essential for MAPK8IP3/JIP3 function in axon elongation. The polypeptide is Kinesin heavy chain isoform 5A (Homo sapiens (Human)).